Reading from the N-terminus, the 153-residue chain is Putative WASP homolog-associated protein with actin, membranes and microtubules-like protein 1 (153 aa).

The stretch at 113 to 151 forms a coiled coil; that stretch reads AIQFYEIQLELYEVKFEILKNKEILLTTQLDSLERLIKD.

The protein is Putative WASP homolog-associated protein with actin, membranes and microtubules-like protein 1 (WHAMMP3) of Homo sapiens (Human).